The following is a 77-amino-acid chain: Large ribosomal subunit protein bL28 (77 aa).

It belongs to the bacterial ribosomal protein bL28 family.

The sequence is that of Large ribosomal subunit protein bL28 from Laribacter hongkongensis (strain HLHK9).